The chain runs to 785 residues: Putative lipase C4A8.10 (785 aa).

Disordered stretches follow at residues 29-99 (HSAT…SSDF) and 115-140 (NTNAINIPEQTRGVSHTSSSPSVGTS). Residues 32 to 41 (TSSTTVPPTV) show a composition bias toward low complexity. A compositionally biased stretch (basic and acidic residues) spans 47 to 58 (TKKESGSIEDRA). The span at 63 to 86 (MTISSGENISKQISENNSSTNPKH) shows a compositional bias: polar residues. Composition is skewed to low complexity over residues 89–99 (SESSPLLSSDF) and 127–140 (GVSHTSSSPSVGTS). Serine 390 serves as the catalytic Charge relay system.

It belongs to the putative lipase ROG1 family.

This Schizosaccharomyces pombe (strain 972 / ATCC 24843) (Fission yeast) protein is Putative lipase C4A8.10.